A 112-amino-acid polypeptide reads, in one-letter code: Probable 4-amino-4-deoxy-L-arabinose-phosphoundecaprenol flippase subunit ArnE (112 aa).

The EamA domain maps to 35 to 110 (RHILFWLGMA…IVVGIVILGT (76 aa)). 3 helical membrane passes run 37–57 (ILFWLGMALLCLGCGMLLWLS), 66–86 (IAYPMLSLNFVWVTLAGWGIW), and 89–109 (PVARRHWLGVGLIVVGIVILG).

It belongs to the ArnE family. As to quaternary structure, heterodimer of ArnE and ArnF.

It localises to the cell inner membrane. Its pathway is bacterial outer membrane biogenesis; lipopolysaccharide biosynthesis. Translocates 4-amino-4-deoxy-L-arabinose-phosphoundecaprenol (alpha-L-Ara4N-phosphoundecaprenol) from the cytoplasmic to the periplasmic side of the inner membrane. In Klebsiella pneumoniae (strain 342), this protein is Probable 4-amino-4-deoxy-L-arabinose-phosphoundecaprenol flippase subunit ArnE.